A 328-amino-acid polypeptide reads, in one-letter code: D-cysteine desulfhydrase (328 aa).

Position 51 is an N6-(pyridoxal phosphate)lysine (K51).

It belongs to the ACC deaminase/D-cysteine desulfhydrase family. Homodimer. Pyridoxal 5'-phosphate serves as cofactor.

The catalysed reaction is D-cysteine + H2O = hydrogen sulfide + pyruvate + NH4(+) + H(+). Its function is as follows. Catalyzes the alpha,beta-elimination reaction of D-cysteine and of several D-cysteine derivatives. It could be a defense mechanism against D-cysteine. This Escherichia coli (strain SMS-3-5 / SECEC) protein is D-cysteine desulfhydrase.